We begin with the raw amino-acid sequence, 641 residues long: MAAKSDGGGVGVGFAQLHNLDEAVGSGGEEDGEPGGGGCGGGGDGSEPGESSSMHICHCCNTSSCYWGCRSACLRSLLGRKPRRSAAADGGDQPLQPPAAPGAGRQPPTPSAARPEPPPPQVERPWLDCLWIVLALLVFFGDVGTDLWLALDYYRKGDYVYFGLTLFFVLVPSLLVQSLSFRWFVQDYTGGGLGAVEGLTSRGPPMMGAGYVHGAARGGPGVRVSPTPGAQRLCRLSVWIWQSVIHLLQMGQVWRYIRTMYLGIQSQRRKEHQRRFYWAMMYEYADVNMLRLLETFLESAPQLVLQLYIMLQKNSAETLPCVSSVTSLMSLAWVLASYHKLLRDSRDDKKSMSYRGAIIQVFWRLFTISSRVISFALFASIFQLYFGIFVVVHWCAMAFWIIHGGTDFCMSKWEEILFNMVVGIVYIFCWFNVKEGRTRYRMFAYYTIVLTENAALTFLWYFYRDPETTDSYAVPALCCVFISFVAGIAMMLLYYGVLHPTGPRAKILASSCCAELLWGIPLPPDVEPMAPEIPGYRGTQVTPTRAVTEQQEDLTADTCLPVFQVRPMGPPTPLGRPYLPEGPLIKIDMPRKRYPAWDAHFVDRRLRRTINILQYVTPTAVGIRYRDGPLLYELLQYESSL.

2 disordered regions span residues 20 to 47 (LDEAVGSGGEEDGEPGGGGCGGGGDGSE) and 84 to 120 (RSAAADGGDQPLQPPAAPGAGRQPPTPSAARPEPPPP). Over residues 34-46 (PGGGGCGGGGDGS) the composition is skewed to gly residues. Positions 107–120 (PPTPSAARPEPPPP) are enriched in pro residues. 7 consecutive transmembrane segments (helical) span residues 130-150 (LWIVLALLVFFGDVGTDLWLA), 159-179 (YVYFGLTLFFVLVPSLLVQSL), 318-338 (TLPCVSSVTSLMSLAWVLASY), 372-392 (VISFALFASIFQLYFGIFVVV), 413-433 (WEEILFNMVVGIVYIFCWFNV), 442-462 (MFAYYTIVLTENAALTFLWYF), and 473-493 (AVPALCCVFISFVAGIAMMLL).

It belongs to the XK family.

The protein resides in the cell membrane. This is XK-related protein 6 from Homo sapiens (Human).